Here is a 133-residue protein sequence, read N- to C-terminus: Ribonuclease P protein component (133 aa).

The protein belongs to the RnpA family. In terms of assembly, consists of a catalytic RNA component (M1 or rnpB) and a protein subunit.

The enzyme catalyses Endonucleolytic cleavage of RNA, removing 5'-extranucleotides from tRNA precursor.. RNaseP catalyzes the removal of the 5'-leader sequence from pre-tRNA to produce the mature 5'-terminus. It can also cleave other RNA substrates such as 4.5S RNA. The protein component plays an auxiliary but essential role in vivo by binding to the 5'-leader sequence and broadening the substrate specificity of the ribozyme. The chain is Ribonuclease P protein component from Corynebacterium glutamicum (strain ATCC 13032 / DSM 20300 / JCM 1318 / BCRC 11384 / CCUG 27702 / LMG 3730 / NBRC 12168 / NCIMB 10025 / NRRL B-2784 / 534).